Here is a 197-residue protein sequence, read N- to C-terminus: GTP cyclohydrolase 1 (197 aa).

Residues cysteine 88, histidine 91, and cysteine 160 each coordinate Zn(2+).

It belongs to the GTP cyclohydrolase I family. In terms of assembly, homomer.

It carries out the reaction GTP + H2O = 7,8-dihydroneopterin 3'-triphosphate + formate + H(+). It functions in the pathway cofactor biosynthesis; 7,8-dihydroneopterin triphosphate biosynthesis; 7,8-dihydroneopterin triphosphate from GTP: step 1/1. In Clostridium beijerinckii (strain ATCC 51743 / NCIMB 8052) (Clostridium acetobutylicum), this protein is GTP cyclohydrolase 1.